The primary structure comprises 151 residues: Urease accessory protein UreE (151 aa).

This sequence belongs to the UreE family.

The protein resides in the cytoplasm. Involved in urease metallocenter assembly. Binds nickel. Probably functions as a nickel donor during metallocenter assembly. This chain is Urease accessory protein UreE, found in Bacillus cereus (strain ATCC 10987 / NRS 248).